A 172-amino-acid chain; its full sequence is Protein LHCP TRANSLOCATION DEFECT (172 aa).

The N-terminal 28 residues, 1–28 (MASIPCTFQLSARASSASAAAAARRSPR), are a transit peptide targeting the chloroplast. Residues 114 to 146 (PVDILLMLAASEGDKPKLEELLRAGAKYDVKDV) form an ANK repeat.

The protein resides in the plastid. The protein localises to the chloroplast. In terms of biological role, involved in the import of light-harvesting complex proteins (LHCP) and subsequent routing of these proteins to the chloroplast signal recognition particle (SRP) pathway. This is Protein LHCP TRANSLOCATION DEFECT (LTD) from Oryza sativa subsp. indica (Rice).